Here is a 375-residue protein sequence, read N- to C-terminus: Probable serine/threonine-protein kinase PBL28 (375 aa).

Position 65 is a phosphothreonine (T65). The Protein kinase domain maps to 76-356 (FSDENLLGKG…MDCVKELQLI (281 aa)). ATP contacts are provided by residues 82 to 90 (LGKGGFGRV) and K104. Y152 is modified (phosphotyrosine). The active-site Proton acceptor is D205. T245 carries the post-translational modification Phosphothreonine. Y253 carries the phosphotyrosine modification.

This sequence belongs to the protein kinase superfamily. Ser/Thr protein kinase family.

The protein localises to the cell membrane. The enzyme catalyses L-seryl-[protein] + ATP = O-phospho-L-seryl-[protein] + ADP + H(+). The catalysed reaction is L-threonyl-[protein] + ATP = O-phospho-L-threonyl-[protein] + ADP + H(+). May be involved in plant defense signaling. The polypeptide is Probable serine/threonine-protein kinase PBL28 (Arabidopsis thaliana (Mouse-ear cress)).